Here is a 956-residue protein sequence, read N- to C-terminus: Calsyntenin-3 (956 aa).

Residues 1–19 form the signal peptide; that stretch reads MTLLLLPLLLASLLASCSC. At 20-847 the chain is on the extracellular side; sequence NKANKHKPWI…SHRNSMIPSA (828 aa). 2 Cadherin domains span residues 29–145 and 146–246; these read IEAE…APVF and VERL…KPSW. N-linked (GlcNAc...) asparagine glycans are attached at residues Asn-299, Asn-327, Asn-347, Asn-507, and Asn-740. A helical membrane pass occupies residues 848-868; that stretch reads ATLIIVVCVGFLVLMVVLGLV. Over 869 to 956 the chain is Cytoplasmic; the sequence is RIHSLHRRVS…RIIETPPHRY (88 aa). A disordered region spans residues 917 to 956; the sequence is ACVTGAVGGQQEDEDSSDSEVADSPSSDERRIIETPPHRY. Acidic residues predominate over residues 927–937; that stretch reads QEDEDSSDSEV. A compositionally biased stretch (basic and acidic residues) spans 943–956; that stretch reads SDERRIIETPPHRY.

It belongs to the calsyntenin family. In terms of assembly, interacts (via cadherin domains) with both alpha and beta isoforms of neurexins (NRXN1, NRXN2 and NRXN3). Directly interacts with APBA2. Forms a tripartite complex with APBA2 and APP. Interacts with low affinity with KLC1. Interacts with SLC23A2/SVCT2. Proteolytically processed under normal cellular conditions. A primary zeta-cleavage generates a large extracellular (soluble) N-terminal domain (sAlc) and a short C-terminal transmembrane fragment (CTF1). A secondary cleavage catalyzed by gamma-secretase within the transmembrane domain releases the beta-Alc-beta chain in the extracellular milieu and produces an intracellular fragment (AlcICD). This processing is strongly suppressed in the tripartite complex formed with APBA2 and APP, which seems to prevent the association with gamma-secretase.

The protein localises to the postsynaptic cell membrane. It is found in the endoplasmic reticulum membrane. The protein resides in the golgi apparatus membrane. Its subcellular location is the cell projection. It localises to the dendrite. Postsynaptic adhesion molecule that binds to presynaptic neurexins to mediate both excitatory and inhibitory synapse formation. Promotes synapse development by acting as a cell adhesion molecule at the postsynaptic membrane, which associates with both neurexin-alpha and neurexin-beta proteins at the presynaptic membrane. Regulates the balance between excitatory and inhibitory synapses by inhibiting formation of excitatory parallel-fiber synapses and promoting formation of inhibitory synapses in the same neuron. May also be involved in ascorbate (vitamin C) uptake via its interaction with SLC23A2/SVCT2. Complex formation with APBA2 and APP, stabilizes APP metabolism and enhances APBA2-mediated suppression of beta-APP40 secretion, due to the retardation of intracellular APP maturation. The sequence is that of Calsyntenin-3 (CLSTN3) from Pongo abelii (Sumatran orangutan).